A 163-amino-acid polypeptide reads, in one-letter code: Calcium-binding protein I (163 aa).

EF-hand domains are found at residues 20-42 (DKNKDRQYSIDEIVQLLKKNSKN), 82-117 (KPEIDIESFLLRFDKNNDKMISHHELKTKLDELGCG), and 118-153 (NSKKTTDYVFEQIDTNKEGSLSYEDLEGFVKFLKQD). The Ca(2+) site is built by D95, N97, D99, M101, E106, D131, N133, E135, S137, and D142.

This is Calcium-binding protein I (cbpI) from Dictyostelium discoideum (Social amoeba).